Consider the following 112-residue polypeptide: MEKILVLLLVALAVVYAVPDPRGIIIHLEDGELCLNSVQCKSKCCHRATGLSLARCAPKASENSECSAKTLYGVYYKCPCERGLTCEGDKSIVGSITNTNFGVCHDAGRSKK.

The first 17 residues, 1–17 (MEKILVLLLVALAVVYA), serve as a signal peptide directing secretion. Residues 18–22 (VPDPR) constitute a propeptide, enterostatin, activation peptide. 5 cysteine pairs are disulfide-bonded: Cys34/Cys45, Cys40/Cys56, Cys44/Cys78, Cys66/Cys86, and Cys80/Cys104.

The protein belongs to the colipase family. In terms of assembly, forms a 1:1 stoichiometric complex with pancreatic lipase. As to expression, expressed by the pancreas.

Its subcellular location is the secreted. Colipase is a cofactor of pancreatic lipase. It allows the lipase to anchor itself to the lipid-water interface. Without colipase the enzyme is washed off by bile salts, which have an inhibitory effect on the lipase. In terms of biological role, enterostatin has a biological activity as a satiety signal. The sequence is that of Colipase (CLPS) from Canis lupus familiaris (Dog).